A 220-amino-acid polypeptide reads, in one-letter code: MASNSEAGGSADYETLMSTSDVELLKRAWRNEKAAPEILQYEGALVDRAKEQIELVEETIEDYVENGIDPLVVSLYQMDLDRAQFLLRSYLRVRLLKIEKFMFHNLNSEEAERRLSEQEKVFATRCADDLAKHFEETVLLKLPENYQSVLKQSLISEVDDMVPQPHLDTFVVCRSKNFVSLNLYEEGESPETVEMERGDLYFIRYKIVKRAIESGQIDLI.

This sequence belongs to the GINS4/SLD5 family. As to quaternary structure, component of the GINS complex. Interacts with EOL1 in the nucleus.

The protein resides in the nucleus. Its function is as follows. The GINS complex plays an essential role in the initiation of DNA replication. Required during embryogenesis. The protein is DNA replication complex GINS protein SLD5 of Arabidopsis thaliana (Mouse-ear cress).